A 292-amino-acid polypeptide reads, in one-letter code: MEWEQLEYFQTLARMQHVTKAAKSLSITQPALSRSIARLENHLGVPLFDRQGRSISLNQYGHIFLRRVQAMMKEYTEGKEEIQALLKPDQGVVSLGFLHTLGTTLVPDLIGSFQQEYPNISFQLKQNHSYWLLERLKSGDLDLCLLASIKPENPIQWIKLWSEELFVFVPNDHPLASRESITLNEIAGERFILLKKGYALRMTVDELFEKANIQPNIMFEGEEATTAAGFVAAGLGISILPDLKGLDQSKITKIRVSWPECQRVIGIAWIKGRFLSPVAETFKQYVISHFSE.

One can recognise an HTH lysR-type domain in the interval 1–58 (MEWEQLEYFQTLARMQHVTKAAKSLSITQPALSRSIARLENHLGVPLFDRQGRSISLN). The H-T-H motif DNA-binding region spans 18-37 (VTKAAKSLSITQPALSRSIA).

Belongs to the LysR transcriptional regulatory family.

This is an uncharacterized protein from Bacillus subtilis (strain 168).